A 250-amino-acid chain; its full sequence is Golgi SNAP receptor complex member 1 (250 aa).

A2 is modified (N-acetylalanine). Over 2 to 229 (AAGTSNYWED…QRINLRKRRD (228 aa)) the chain is Cytoplasmic. Residues 9-30 (WEDLRKQARQLENELDLKLVSF) are a coiled coil. Residues 37–59 (YSHSSARDGGRDRYSSDTTPLLN) form a disordered region. The span at 41–51 (SARDGGRDRYS) shows a compositional bias: basic and acidic residues. A coiled-coil region spans residues 68 to 95 (ETMAIEIEQLLARLTGVNDKMAEYTHSA). Residue S141 is modified to Phosphoserine. A helical; Anchor for type IV membrane protein transmembrane segment spans residues 230 to 250 (SLILGGVIGICTILLLLYAFH).

This sequence belongs to the GOSR1 family. In terms of assembly, component of several multiprotein Golgi SNARE complexes. Identified in a SNARE complex with BET1, STX5 and YKT6, in a SNARE complex with BET1L, STX5 and YKT6, in a SNARE complex with STX5, GOSR2, SEC22B and BET1, and in complex with STX5 and COG3. Interacts with GABARAPL2. Interacts with the 34 kDa STX5 isoform.

The protein resides in the golgi apparatus membrane. In terms of biological role, involved in transport from the ER to the Golgi apparatus as well as in intra-Golgi transport. It belongs to a super-family of proteins called t-SNAREs or soluble NSF (N-ethylmaleimide-sensitive factor) attachment protein receptor. May play a protective role against hydrogen peroxide induced cytotoxicity under glutathione depleted conditions in neuronal cells by regulating the intracellular ROS levels via inhibition of p38 MAPK (MAPK11, MAPK12, MAPK13 and MAPK14). Participates in docking and fusion stage of ER to cis-Golgi transport. Plays an important physiological role in VLDL-transport vesicle-Golgi fusion and thus in VLDL delivery to the hepatic cis-Golgi. The sequence is that of Golgi SNAP receptor complex member 1 (Gosr1) from Rattus norvegicus (Rat).